We begin with the raw amino-acid sequence, 246 residues long: uncharacterized protein (246 aa).

Residues 1–30 (MKKKQVSHAIIISVMLSFVIAVFHTIHASE) form the signal peptide.

This is an uncharacterized protein from Bacillus subtilis (strain 168).